Here is a 1498-residue protein sequence, read N- to C-terminus: DNA-directed RNA polymerase subunit beta' (1498 aa).

The Zn(2+) site is built by cysteine 67, cysteine 69, cysteine 82, and cysteine 85. Mg(2+) contacts are provided by aspartate 499, aspartate 501, and aspartate 503. 4 residues coordinate Zn(2+): cysteine 867, cysteine 943, cysteine 950, and cysteine 953.

Belongs to the RNA polymerase beta' chain family. In terms of assembly, the RNAP catalytic core consists of 2 alpha, 1 beta, 1 beta' and 1 omega subunit. When a sigma factor is associated with the core the holoenzyme is formed, which can initiate transcription. The cofactor is Mg(2+). Requires Zn(2+) as cofactor.

The catalysed reaction is RNA(n) + a ribonucleoside 5'-triphosphate = RNA(n+1) + diphosphate. Functionally, DNA-dependent RNA polymerase catalyzes the transcription of DNA into RNA using the four ribonucleoside triphosphates as substrates. The chain is DNA-directed RNA polymerase subunit beta' from Chlorobium phaeobacteroides (strain BS1).